Here is a 1025-residue protein sequence, read N- to C-terminus: DNA ligase 4 (1025 aa).

Positions 1–36 (MMQPTPAPSSAPGSPQRTQAEPEMETPSYPQPPQNV) are disordered. The ATP site is built by E289, K291, L292, R296, E349, F387, E447, K452, K469, and K471. The active-site N6-AMP-lysine intermediate is the K291. E349 is a binding site for Mg(2+). E447 serves as a coordination point for Mg(2+). The 97-residue stretch at 667 to 763 (VKTDIFNGMK…EPAPFKKKYF (97 aa)) folds into the BRCT 1 domain. The interval 773-904 (ADEYNEDDGE…TTPDVDGDVK (132 aa)) is disordered. Acidic residues-rich tracts occupy residues 775–785 (EYNEDDGEEEG) and 806–816 (SETEDEDEEQA). A compositionally biased stretch (basic and acidic residues) spans 817–838 (PEIKEEQDGELHEWLKVDDRKS). The segment covering 845–870 (DEEDSVTEDDSDNADVADEEEPDLDD) has biased composition (acidic residues). The segment covering 891-904 (RHRETTPDVDGDVK) has biased composition (basic and acidic residues). Positions 915 to 1025 (DPDVIFKHLC…TLLDEEEFAP (111 aa)) constitute a BRCT 2 domain.

This sequence belongs to the ATP-dependent DNA ligase family. It depends on Mg(2+) as a cofactor.

The protein localises to the nucleus. It catalyses the reaction ATP + (deoxyribonucleotide)n-3'-hydroxyl + 5'-phospho-(deoxyribonucleotide)m = (deoxyribonucleotide)n+m + AMP + diphosphate.. In terms of biological role, DNA ligase involved in DNA non-homologous end joining (NHEJ); required for double-strand break (DSB) repair. This is DNA ligase 4 (LIG4) from Coprinopsis cinerea (Inky cap fungus).